The chain runs to 818 residues: Serine/threonine-protein phosphatase 4 regulatory subunit 3 (818 aa).

The region spanning 1–100 (MTDTRRRVKV…DEIWEKICQV (100 aa)) is the WH1 domain. A disordered region spans residues 718–818 (LAKSSFSGRQ…PPSKKSRLSS (101 aa)). A compositionally biased stretch (polar residues) spans 721 to 730 (SSFSGRQNPS). Over residues 736–756 (SGSTKTSLSSPPPSASLSPGS) the composition is skewed to low complexity. Acidic residues predominate over residues 788 to 804 (YPDDDEEEEDDDDEESK).

Belongs to the SMEK family. In terms of assembly, serine/threonine-protein phosphatase 4 (PP4) occurs in different assemblies of the catalytic and one or more regulatory subunits.

Functionally, regulatory subunit of serine/threonine-protein phosphatase 4. This chain is Serine/threonine-protein phosphatase 4 regulatory subunit 3 (smek1), found in Tetraodon nigroviridis (Spotted green pufferfish).